Here is a 347-residue protein sequence, read N- to C-terminus: Heat-inducible transcription repressor HrcA (347 aa).

The protein belongs to the HrcA family.

In terms of biological role, negative regulator of class I heat shock genes (grpE-dnaK-dnaJ and groELS operons). Prevents heat-shock induction of these operons. This Sphingopyxis alaskensis (strain DSM 13593 / LMG 18877 / RB2256) (Sphingomonas alaskensis) protein is Heat-inducible transcription repressor HrcA.